Consider the following 144-residue polypeptide: Large ribosomal subunit protein uL16 (144 aa).

The span at 1-19 (MLLPKRVKYRRQHRPKTTG) shows a compositional bias: basic residues. The disordered stretch occupies residues 1 to 23 (MLLPKRVKYRRQHRPKTTGRSKG).

The protein belongs to the universal ribosomal protein uL16 family. As to quaternary structure, part of the 50S ribosomal subunit.

Binds 23S rRNA and is also seen to make contacts with the A and possibly P site tRNAs. The sequence is that of Large ribosomal subunit protein uL16 from Staphylococcus aureus (strain Mu50 / ATCC 700699).